A 157-amino-acid chain; its full sequence is Beta-defensin 125 (157 aa).

The first 20 residues, 1 to 20 (MNILMLTFIICGLLTQVTKG), serve as a signal peptide directing secretion. 3 cysteine pairs are disulfide-bonded: Cys27-Cys55, Cys35-Cys49, and Cys39-Cys56. The interval 109–157 (GETMTPETNTPETTMPPPETTTPETTMPPSETATSETMPPPSQRALTHN) is disordered. 2 stretches are compositionally biased toward low complexity: residues 110 to 121 (ETMTPETNTPET) and 129 to 145 (TTPE…TSET).

This sequence belongs to the beta-defensin family.

The protein localises to the secreted. Has antibacterial activity. The polypeptide is Beta-defensin 125 (DEFB125) (Pan troglodytes (Chimpanzee)).